Consider the following 161-residue polypeptide: Troponin C, slow skeletal and cardiac muscles (161 aa).

The residue at position 1 (M1) is an N-acetylmethionine. EF-hand domains lie at Q16–N51, P52–D87, K92–T127, and I128–E161. Residues D65, D67, S69, T71, and E76 each coordinate Ca(2+). Position 98 is a phosphoserine (S98). Ca(2+)-binding residues include D105, N107, D109, Y111, E116, D141, N143, D145, R147, and E152.

The protein belongs to the troponin C family.

Its function is as follows. Troponin is the central regulatory protein of striated muscle contraction. Tn consists of three components: Tn-I which is the inhibitor of actomyosin ATPase, Tn-T which contains the binding site for tropomyosin and Tn-C. The binding of calcium to Tn-C abolishes the inhibitory action of Tn on actin filaments. The polypeptide is Troponin C, slow skeletal and cardiac muscles (TNNC1) (Homo sapiens (Human)).